The sequence spans 667 residues: UvrABC system protein C (667 aa).

Residues 43-122 (AEPGCYLMRD…IKNQQPHFNV (80 aa)) enclose the GIY-YIG domain. Residues 232–267 (QELKVLLEKQMERYSDRMDYESAANIRDQIKGLEQL) form the UVR domain.

Belongs to the UvrC family. Interacts with UvrB in an incision complex.

The protein localises to the cytoplasm. The UvrABC repair system catalyzes the recognition and processing of DNA lesions. UvrC both incises the 5' and 3' sides of the lesion. The N-terminal half is responsible for the 3' incision and the C-terminal half is responsible for the 5' incision. In Prochlorococcus marinus (strain MIT 9313), this protein is UvrABC system protein C.